The primary structure comprises 186 residues: Small ribosomal subunit protein uS5 (186 aa).

Positions 20–83 constitute an S5 DRBM domain; sequence FVDKLVHINR…EAAKRDMIFV (64 aa).

This sequence belongs to the universal ribosomal protein uS5 family. Part of the 30S ribosomal subunit. Contacts proteins S4 and S8.

In terms of biological role, with S4 and S12 plays an important role in translational accuracy. Functionally, located at the back of the 30S subunit body where it stabilizes the conformation of the head with respect to the body. This is Small ribosomal subunit protein uS5 from Brucella ovis (strain ATCC 25840 / 63/290 / NCTC 10512).